We begin with the raw amino-acid sequence, 209 residues long: Superoxide dismutase [Mn/Fe] (209 aa).

Fe(3+) contacts are provided by His38, His90, Asp172, and His176. Positions 38, 90, 172, and 176 each coordinate Mn(2+).

It belongs to the iron/manganese superoxide dismutase family. Mn(2+) serves as cofactor. Requires Fe(3+) as cofactor.

The enzyme catalyses 2 superoxide + 2 H(+) = H2O2 + O2. In terms of biological role, destroys superoxide anion radicals which are normally produced within the cells and which are toxic to biological systems. Catalyzes the dismutation of superoxide anion radicals into O2 and H2O2 by successive reduction and oxidation of the transition metal ion at the active site. The protein is Superoxide dismutase [Mn/Fe] (sodB) of Rickettsia typhi (strain ATCC VR-144 / Wilmington).